We begin with the raw amino-acid sequence, 282 residues long: Protein OS-9 homolog (282 aa).

The first 23 residues, 1-23 (MRITQILLCLVIVALSSSSHVWS), serve as a signal peptide directing secretion. N94 carries N-linked (GlcNAc...) asparagine glycosylation. The MRH domain maps to 120-239 (EKCLFRQEGW…TVQCPTLCKH (120 aa)). C122 and C135 are oxidised to a cystine. A mannooligosaccharide derivative contacts are provided by W129, W130, and Q142. Residues N169 and N190 are each glycosylated (N-linked (GlcNAc...) asparagine). Cystine bridges form between C194–C225 and C209–C237. The a mannooligosaccharide derivative site is built by D195, R201, E221, and Y227. Positions 262–276 (DATRNKEEQAVDESP) are enriched in basic and acidic residues. The segment at 262–282 (DATRNKEEQAVDESPKMIADS) is disordered.

It belongs to the OS-9 family. Interacts with HRD3A.

Its subcellular location is the endoplasmic reticulum. Its function is as follows. Lectin which functions in endoplasmic reticulum (ER) quality control and ER-associated degradation (ERAD). May bind terminally misfolded non-glycosylated proteins as well as improperly folded glycoproteins, retain them in the ER, and possibly transfer them to the ubiquitination machinery and promote their degradation. Targets the misfolded LRR receptor kinase BRI1 and the misfolded receptor-like kinase EFR. The chain is Protein OS-9 homolog from Arabidopsis thaliana (Mouse-ear cress).